A 389-amino-acid chain; its full sequence is (S)-8-oxocitronellyl enol synthase CYC1 (389 aa).

Residues 34–36, 62–63, 80–81, 104–105, and Gln138 each bind NADP(+); these read TGI, RR, DV, and AW. Active-site residues include Lys142 and Tyr174. Substrate is bound by residues Lys142 and Tyr174. Residues Tyr174, Val201, and 208–210 each bind NADP(+); that span reads SMM. Ser350 contributes to the substrate binding site.

This sequence belongs to the short-chain dehydrogenases/reductases (SDR) family. Highly divergent.

The catalysed reaction is (S)-8-oxocitronellyl enol + NADP(+) = (6E)-8-oxogeranial + NADPH + H(+). It catalyses the reaction (S)-8-oxocitronellyl enol + NAD(+) = (6E)-8-oxogeranial + NADH + H(+). Iridoid synthase that catalyzes the first step in generation of the iridoid ring scaffold using the linear monoterpene (6E)-8-oxogeranial as substrate. Iridoids comprise a large family of distinctive bicyclic monoterpenes that possess a wide range of pharmacological activities, including anticancer, anti-inflammatory, antifungal and antibacterial activities. This Camptotheca acuminata (Happy tree) protein is (S)-8-oxocitronellyl enol synthase CYC1.